The sequence spans 155 residues: 3-hydroxyacyl-[acyl-carrier-protein] dehydratase FabZ (155 aa).

Residue histidine 58 is part of the active site.

Belongs to the thioester dehydratase family. FabZ subfamily.

It localises to the cytoplasm. It carries out the reaction a (3R)-hydroxyacyl-[ACP] = a (2E)-enoyl-[ACP] + H2O. Involved in unsaturated fatty acids biosynthesis. Catalyzes the dehydration of short chain beta-hydroxyacyl-ACPs and long chain saturated and unsaturated beta-hydroxyacyl-ACPs. This is 3-hydroxyacyl-[acyl-carrier-protein] dehydratase FabZ from Rhizobium etli (strain ATCC 51251 / DSM 11541 / JCM 21823 / NBRC 15573 / CFN 42).